Reading from the N-terminus, the 513-residue chain is E3 ubiquitin-protein ligase XBAT33 (513 aa).

ANK repeat units lie at residues 44–73 (GLNS…DVNS), 77–106 (CGQT…NVTR), 111–140 (AGRT…PSDK), 171–200 (GGIT…NVSA), and 214–244 (AGST…KMTL). The RING-type zinc finger occupies 312–362 (CAVCLERTCTVAAEGCEHQLCVRCALYLCSSSNVPSVTVGPPGSIPCPLCR). Disordered stretches follow at residues 397-417 (DTTD…SKTR) and 455-483 (HGTE…EEGQ). 2 stretches are compositionally biased toward basic and acidic residues: residues 455 to 466 (HGTERHSEEHVE) and 474 to 483 (TEQEKIEEGQ).

It catalyses the reaction S-ubiquitinyl-[E2 ubiquitin-conjugating enzyme]-L-cysteine + [acceptor protein]-L-lysine = [E2 ubiquitin-conjugating enzyme]-L-cysteine + N(6)-ubiquitinyl-[acceptor protein]-L-lysine.. It participates in protein modification; protein ubiquitination. Functionally, possesses E3 ubiquitin-protein ligase activity when associated with the E2 enzyme UBC8 in vitro. In Arabidopsis thaliana (Mouse-ear cress), this protein is E3 ubiquitin-protein ligase XBAT33 (XBAT33).